The primary structure comprises 251 residues: MSETPQKTTHFGYKTVAENDKASMVADVFHSVAAKYDVMNDLMSFGVHRLWKRQTIASSGVRKGHHVLDLAGGTGDLTAKFSQLVGETGQVILGDINSSMLKVGREKLHNLGLVGNIDYVQMNAEALPFPDNSFDLITIAFGLRNVTDKDKALRSMYRILKPGGRLLVLEFSKPEHEILSKAYDFYSFNLLPTMGKLVANDSESYKYLAESIRMHPDQDTLKSMMSDAGFEQTTYQNLTGGIVALHRGFKY.

S-adenosyl-L-methionine is bound by residues T74, D95, and 123-124 (NA).

The protein belongs to the class I-like SAM-binding methyltransferase superfamily. MenG/UbiE family.

The enzyme catalyses a 2-demethylmenaquinol + S-adenosyl-L-methionine = a menaquinol + S-adenosyl-L-homocysteine + H(+). It catalyses the reaction a 2-methoxy-6-(all-trans-polyprenyl)benzene-1,4-diol + S-adenosyl-L-methionine = a 5-methoxy-2-methyl-3-(all-trans-polyprenyl)benzene-1,4-diol + S-adenosyl-L-homocysteine + H(+). The protein operates within quinol/quinone metabolism; menaquinone biosynthesis; menaquinol from 1,4-dihydroxy-2-naphthoate: step 2/2. It functions in the pathway cofactor biosynthesis; ubiquinone biosynthesis. Methyltransferase required for the conversion of demethylmenaquinol (DMKH2) to menaquinol (MKH2) and the conversion of 2-polyprenyl-6-methoxy-1,4-benzoquinol (DDMQH2) to 2-polyprenyl-3-methyl-6-methoxy-1,4-benzoquinol (DMQH2). The sequence is that of Ubiquinone/menaquinone biosynthesis C-methyltransferase UbiE from Pseudoalteromonas translucida (strain TAC 125).